We begin with the raw amino-acid sequence, 257 residues long: Nickel import system ATP-binding protein NikD (257 aa).

In terms of domain architecture, ABC transporter spans 4–245; sequence IDIQNLTIKN…HLHPYTERLI (242 aa). 37–44 contributes to the ATP binding site; that stretch reads GESGAGKS.

Belongs to the ABC transporter superfamily. As to quaternary structure, the complex is composed of two ATP-binding proteins (NikD and NikE), two transmembrane proteins (NikB and NikC) and a solute-binding protein (NikA).

Its subcellular location is the cell membrane. The catalysed reaction is Ni(2+)(out) + ATP + H2O = Ni(2+)(in) + ADP + phosphate + H(+). In terms of biological role, part of the ABC transporter complex NikABCDE (Opp2) involved in nickel import. Probably responsible for energy coupling to the transport system. This Staphylococcus aureus (strain Mu50 / ATCC 700699) protein is Nickel import system ATP-binding protein NikD.